The chain runs to 567 residues: Dihydrolipoyl dehydrogenase 2, chloroplastic (567 aa).

A chloroplast-targeting transit peptide spans 1–67 (MQSVLSLSFS…HIQSRRIEVS (67 aa)). Residues 114-122 (EGDVVGGTC), lysine 131, glycine 197, and 221-223 (TGS) contribute to the FAD site. Residues cysteine 122 and cysteine 127 are joined by a disulfide bond. NAD(+) contacts are provided by residues 258–265 (GSGYIGLE), glutamate 281, and glycine 354. FAD is bound by residues aspartate 400 and 406–409 (MLAH). The Proton acceptor role is filled by histidine 536.

The protein belongs to the class-I pyridine nucleotide-disulfide oxidoreductase family. Homodimer. Part of the plastidial pyruvate dehydrogenase complex (PDC) containing multiple copies of three enzymatic components: pyruvate dehydrogenase (E1), dihydrolipoamide acetyltransferase (E2) and lipoamide dehydrogenase (E3). It depends on FAD as a cofactor. Expressed mainly in flower buds and immature siliques, and to a lesser extent in flowers.

Its subcellular location is the plastid. The protein localises to the chloroplast stroma. The catalysed reaction is N(6)-[(R)-dihydrolipoyl]-L-lysyl-[protein] + NAD(+) = N(6)-[(R)-lipoyl]-L-lysyl-[protein] + NADH + H(+). In terms of biological role, lipoamide dehydrogenase is a component of the plastidial pyruvate dehydrogenase complex (PDC). The polypeptide is Dihydrolipoyl dehydrogenase 2, chloroplastic (LPD2) (Arabidopsis thaliana (Mouse-ear cress)).